The chain runs to 253 residues: HTH-type transcriptional regulator YdeO (253 aa).

Positions 137–233 constitute an HTH araC/xylS-type domain; it reads GKVRNIVNMK…GNSPKRVSKE (97 aa). 2 DNA-binding regions (H-T-H motif) span residues 154-175 and 200-223; these read KDICDCLYISESLLKKKLKQEQ and VNKIAEQCGYASTSYFIYAFRKHF.

Induces the expression of gadE. Could also regulate the expression of other genes involved in acid resistance. The polypeptide is HTH-type transcriptional regulator YdeO (ydeO) (Shigella flexneri).